Here is a 392-residue protein sequence, read N- to C-terminus: Formate-dependent phosphoribosylglycinamide formyltransferase (392 aa).

N(1)-(5-phospho-beta-D-ribosyl)glycinamide-binding positions include 22 to 23 and Glu82; that span reads EL. ATP contacts are provided by residues Arg114, Lys155, 160–165, 195–198, and Glu203; these read SSGKGQ and EGVV. Residues 119-308 form the ATP-grasp domain; that stretch reads RLAAEELQLP…EFALHVRAFL (190 aa). 2 residues coordinate Mg(2+): Glu267 and Glu279. N(1)-(5-phospho-beta-D-ribosyl)glycinamide contacts are provided by residues Asp286, Lys355, and 362–363; that span reads RR.

Belongs to the PurK/PurT family. Homodimer.

The enzyme catalyses N(1)-(5-phospho-beta-D-ribosyl)glycinamide + formate + ATP = N(2)-formyl-N(1)-(5-phospho-beta-D-ribosyl)glycinamide + ADP + phosphate + H(+). It participates in purine metabolism; IMP biosynthesis via de novo pathway; N(2)-formyl-N(1)-(5-phospho-D-ribosyl)glycinamide from N(1)-(5-phospho-D-ribosyl)glycinamide (formate route): step 1/1. Its function is as follows. Involved in the de novo purine biosynthesis. Catalyzes the transfer of formate to 5-phospho-ribosyl-glycinamide (GAR), producing 5-phospho-ribosyl-N-formylglycinamide (FGAR). Formate is provided by PurU via hydrolysis of 10-formyl-tetrahydrofolate. The sequence is that of Formate-dependent phosphoribosylglycinamide formyltransferase from Shigella flexneri.